A 176-amino-acid polypeptide reads, in one-letter code: MTTIVSVRRHGKVVMAGDGQVSLGNTVMKGNAKKVRRLYHGEVIAGFAGATADAFTLFERFEAQLEKHQGHLVRAAVELAKDWRTDRSLSRLEAMLAVANKDASLIITGNGDVVEPEDGLIAMGSGGAFAQAAARALLLKTDLSAREIAETSLHIAGDICVFTNHNITIEEQDLVG.

Thr-2 is an active-site residue. Positions 157, 160, and 163 each coordinate Na(+).

It belongs to the peptidase T1B family. HslV subfamily. In terms of assembly, a double ring-shaped homohexamer of HslV is capped on each side by a ring-shaped HslU homohexamer. The assembly of the HslU/HslV complex is dependent on binding of ATP.

The protein resides in the cytoplasm. The enzyme catalyses ATP-dependent cleavage of peptide bonds with broad specificity.. Allosterically activated by HslU binding. Functionally, protease subunit of a proteasome-like degradation complex believed to be a general protein degrading machinery. The polypeptide is ATP-dependent protease subunit HslV (Pseudomonas savastanoi pv. phaseolicola (strain 1448A / Race 6) (Pseudomonas syringae pv. phaseolicola (strain 1448A / Race 6))).